A 790-amino-acid polypeptide reads, in one-letter code: MAATTANPEMTSDVPPLGPAIASGNPGPGIQGGGAIVQRAIKRRPGLDFDDDGEGNSKFLRCDDDQMSNDKERFARSDDEQSSADKERLARENHSEIERRRRNKMTAYITELSDMVPTCSALARKPDKLTILRMAVSHMKSLRGTGNTSTDGTYKPSFLTDQELKHLILEAADGFLFIVSCETGRVVYVSDSVTPVLNQPQSEWFGSTLYDQVHPDDVDKLREQLSTSENALTGRILDLKTGTVKKEGQQSSMRMCMGSRRSFICRMRCGNSSVDSVSMNRLSFVRNRCRNGLGSAKDGEPHFVVVHCTGYIKAWPPAGVSLPDDDPEAGQGSKFCLVAIGRLQVTSSPNCTDMSNVCQPTEFISRHNIEGIFTFVDHRCVATVGYQPQELLGKNIVEFCHPEDQQLLRDSFQQVVKLKGQVLSVMFRFRSKNREWLWVRTSSFTFQNPYSDEIEYIICTNTNVKNSSQEPRPSLSNTIQRPQLGPTANLSLEMGSGQLAPRQQQQQTELDVVPGRDGLTSCNHSQVSVQPVTTTGPEHSKPLEKSESLFAQDRDPRFSEIYSNISTDQSKGISSSTVPATQQLFSQGNTFPPTPRPAENFRNSGLAPPVTIVQPSTSAGQMLAQISRHSNPTQGAAPAWTPSTRPGFSAQQVVTEATAKTRSSQFGVGSFQTPSSFSPMSLPGASTASPGAAAYPSLTNRGSNFAPETGQTAGQFQTRTAEGVGVWPQWQGQQSHHRSSSNEQHVQQPSAQQPGQPEVFQEMLSMLGDQSNSYNNEEFPDLTMFPSFSE.

A compositionally biased stretch (polar residues) spans 1–10 (MAATTANPEM). The disordered stretch occupies residues 1–96 (MAATTANPEM…ERLARENHSE (96 aa)). Residue Ala2 is modified to N-acetylalanine. The segment covering 26–35 (PGPGIQGGGA) has biased composition (gly residues). Residue Lys58 forms a Glycyl lysine isopeptide (Lys-Gly) (interchain with G-Cter in SUMO2) linkage. The span at 60–96 (LRCDDDQMSNDKERFARSDDEQSSADKERLARENHSE) shows a compositional bias: basic and acidic residues. Ser77 carries the phosphoserine modification. A DNA-binding region spans residues 88–128 (RLARENHSEIERRRRNKMTAYITELSDMVPTCSALARKPDK). Positions 89–142 (LARENHSEIERRRRNKMTAYITELSDMVPTCSALARKPDKLTILRMAVSHMKSL) constitute a bHLH domain. Residues 112–168 (LSDMVPTCSALARKPDKLTILRMAVSHMKSLRGTGNTSTDGTYKPSFLTDQELKHLI) form a required for heterodimer formation with HIF1A region. The tract at residues 112-264 (LSDMVPTCSA…MCMGSRRSFI (153 aa)) is required for heterodimer formation with EPAS1. 2 consecutive PAS domains span residues 161 to 235 (DQEL…LTGR) and 349 to 419 (PNCT…VKLK). The interval 167-171 (LILEA) is mediates the transcription activity and dimerization of the AHR:ARNT complex. Residues 424-467 (SVMFRFRSKNREWLWVRTSSFTFQNPYSDEIEYIICTNTNVKNS) form the PAC domain. 3 stretches are compositionally biased toward polar residues: residues 465 to 490 (KNSS…TANL), 520 to 537 (TSCN…TTGP), and 661 to 679 (TRSS…SFSP). Disordered regions lie at residues 465–492 (KNSS…NLSL), 514–543 (PGRD…SKPL), 661–716 (TRSS…AGQF), and 728–790 (PQWQ…SFSE). Over residues 683 to 697 (PGASTASPGAAAYPS) the composition is skewed to low complexity. A compositionally biased stretch (polar residues) spans 741 to 755 (SNEQHVQQPSAQQPG).

As to quaternary structure, monomer. Homodimer only upon binding to a DNA. Efficient DNA binding requires dimerization with another bHLH protein. Interacts with TACC3. Interacts with HIF1A, EPAS1, NPAS1 and NPAS3; forms a heterodimer that binds core DNA sequence 5'-TACGTG-3' within the hypoxia response element (HRE) of target gene promoters. Forms a heterodimer with AHRR, as well as with other bHLH proteins. Interacts with NOCA7. Interacts with TACC3. Interacts with AHR; the heterodimer ARNT:AHR binds to core DNA sequence 5'-TGCGTG-3' within the dioxin response element (DRE) of target gene promoters and activates their transcription. Interacts with SIM1 and NPAS4.

Its subcellular location is the nucleus. Required for activity of the AHR. Upon ligand binding, AHR translocates into the nucleus, where it heterodimerizes with ARNT and induces transcription by binding to xenobiotic response elements (XRE). Not required for the ligand-binding subunit to translocate from the cytosol to the nucleus after ligand binding. The complex initiates transcription of genes involved in the regulation of a variety of biological processes, including angiogenesis, hematopoiesis, drug and lipid metabolism, cell motility and immune modulation. The heterodimer binds to core DNA sequence 5'-TACGTG-3' within the hypoxia response element (HRE) of target gene promoters and functions as a transcriptional regulator of the adaptive response to hypoxia. The heterodimer ARNT:AHR binds to core DNA sequence 5'-TGCGTG-3' within the dioxin response element (DRE) of target gene promoters and activates their transcription. The sequence is that of Aryl hydrocarbon receptor nuclear translocator (ARNT) from Bos taurus (Bovine).